Here is a 190-residue protein sequence, read N- to C-terminus: Endoribonuclease YbeY (190 aa).

Residues 1–25 (MSQPRPGHRPDCNGADPDSNFASMT) are disordered. His-147, His-151, and His-157 together coordinate Zn(2+).

It belongs to the endoribonuclease YbeY family. Zn(2+) serves as cofactor.

It localises to the cytoplasm. In terms of biological role, single strand-specific metallo-endoribonuclease involved in late-stage 70S ribosome quality control and in maturation of the 3' terminus of the 16S rRNA. The sequence is that of Endoribonuclease YbeY from Rhodopseudomonas palustris (strain ATCC BAA-98 / CGA009).